The sequence spans 704 residues: Elongation factor G (704 aa).

One can recognise a tr-type G domain in the interval 8 to 291 (DRVRNIGIMA…AVIDYLASPV (284 aa)). Residues 17-24 (AHIDAGKT), 90-94 (DTPGH), and 144-147 (NKMD) contribute to the GTP site.

The protein belongs to the TRAFAC class translation factor GTPase superfamily. Classic translation factor GTPase family. EF-G/EF-2 subfamily.

The protein resides in the cytoplasm. Functionally, catalyzes the GTP-dependent ribosomal translocation step during translation elongation. During this step, the ribosome changes from the pre-translocational (PRE) to the post-translocational (POST) state as the newly formed A-site-bound peptidyl-tRNA and P-site-bound deacylated tRNA move to the P and E sites, respectively. Catalyzes the coordinated movement of the two tRNA molecules, the mRNA and conformational changes in the ribosome. This is Elongation factor G from Chlorobaculum tepidum (strain ATCC 49652 / DSM 12025 / NBRC 103806 / TLS) (Chlorobium tepidum).